The following is a 758-amino-acid chain: Zinc finger protein VAR3, chloroplastic (758 aa).

The tract at residues 122 to 502 (FPGFPDELLR…PKEETQIGLI (381 aa)) is 3 X approximate repeat. 2 RanBP2-type zinc fingers span residues 276–305 (KRGD…ARPK) and 308–338 (LTGS…KRPR). Repeat 1 spans residues 368 to 415 (RWLSKVAQGGSDANSVDTDEDFPEIMPLRKGVNRYVVSTRKPPLERRL). 5 disordered regions span residues 410–470 (PLER…RFES), 512–545 (GGNQ…SEEP), 572–606 (EKMP…DSDF), 629–654 (TLPA…INKS), and 727–758 (KRKT…KGDK). 3 stretches are compositionally biased toward basic and acidic residues: residues 457–469 (RSDD…RRFE), 519–545 (QEDK…SEEP), and 572–581 (EKMPMRKGEN). Repeat 2 spans residues 547–596 (RWFKRVTELHNVSDLESAIPQEISPEKMPMRKGENRFVVSRKKDRSLTSP). Repeat unit 3 spans residues 688–736 (RWFKRVAEIKNISELSEIPDEDFPSIMPMRKGVNRFVVSKRKTPLERRL).

As to quaternary structure, interacts in vitro with the chloroplast-located protein CCD4/NCED4. Homodimer. Interacts with ORRM1. Interacts with PCMP-H51/CRR28 and PCMP-H12/OTP82. Interacts with ORRM6. In terms of tissue distribution, weakly expressed in leaves and roots.

The protein resides in the plastid. It localises to the chloroplast. Functionally, probable component of some protein complex required for chloroplast and palisade cell development. Involved in C-to-U editing of chloroplastic RNA. Controls a large number of chloroplastic editing sites. Binds the editing recognition trans-factors PCMP-H51/CRR28 and PCMP-H12/OTP82. The protein is Zinc finger protein VAR3, chloroplastic of Arabidopsis thaliana (Mouse-ear cress).